A 126-amino-acid polypeptide reads, in one-letter code: MNITLLKSKIHRANVTEARLDYVGSISIDEKLLQASGILEYEKVQVVNVNNGARFETYTIATQEEGVVCLNGAAARLAEVGDKVIIMSYADFNEEEAKTFKPKVVFVDENNTATKITNYEKHGAIF.

S25 serves as the catalytic Schiff-base intermediate with substrate; via pyruvic acid. Residue S25 is modified to Pyruvic acid (Ser). T57 contributes to the substrate binding site. Y58 functions as the Proton donor in the catalytic mechanism. Residue 72 to 74 coordinates substrate; it reads GAA.

The protein belongs to the PanD family. In terms of assembly, heterooctamer of four alpha and four beta subunits. The cofactor is pyruvate. Is synthesized initially as an inactive proenzyme, which is activated by self-cleavage at a specific serine bond to produce a beta-subunit with a hydroxyl group at its C-terminus and an alpha-subunit with a pyruvoyl group at its N-terminus.

It localises to the cytoplasm. It catalyses the reaction L-aspartate + H(+) = beta-alanine + CO2. The protein operates within cofactor biosynthesis; (R)-pantothenate biosynthesis; beta-alanine from L-aspartate: step 1/1. Functionally, catalyzes the pyruvoyl-dependent decarboxylation of aspartate to produce beta-alanine. This chain is Aspartate 1-decarboxylase, found in Campylobacter jejuni subsp. jejuni serotype O:23/36 (strain 81-176).